Consider the following 198-residue polypeptide: Holliday junction branch migration complex subunit RuvA (198 aa).

The segment at 1-63 (MYDYIKGQLT…EDAQLLFGFH (63 aa)) is domain I. Residues 64-142 (SEEEKDVFLK…EAPKEESSKL (79 aa)) are domain II. Positions 143 to 147 (PKAKH) are flexible linker. A domain III region spans residues 148–198 (QENEQLDEAIEALLALGYKATELKKIRAFFEGTSETAEQYIKSALKMLMKG).

Belongs to the RuvA family. In terms of assembly, homotetramer. Forms an RuvA(8)-RuvB(12)-Holliday junction (HJ) complex. HJ DNA is sandwiched between 2 RuvA tetramers; dsDNA enters through RuvA and exits via RuvB. An RuvB hexamer assembles on each DNA strand where it exits the tetramer. Each RuvB hexamer is contacted by two RuvA subunits (via domain III) on 2 adjacent RuvB subunits; this complex drives branch migration. In the full resolvosome a probable DNA-RuvA(4)-RuvB(12)-RuvC(2) complex forms which resolves the HJ.

Its subcellular location is the cytoplasm. Functionally, the RuvA-RuvB-RuvC complex processes Holliday junction (HJ) DNA during genetic recombination and DNA repair, while the RuvA-RuvB complex plays an important role in the rescue of blocked DNA replication forks via replication fork reversal (RFR). RuvA specifically binds to HJ cruciform DNA, conferring on it an open structure. The RuvB hexamer acts as an ATP-dependent pump, pulling dsDNA into and through the RuvAB complex. HJ branch migration allows RuvC to scan DNA until it finds its consensus sequence, where it cleaves and resolves the cruciform DNA. The polypeptide is Holliday junction branch migration complex subunit RuvA (Streptococcus equi subsp. zooepidemicus (strain MGCS10565)).